The chain runs to 186 residues: UPF0149 protein Pfl01_5435 (186 aa).

Belongs to the UPF0149 family.

In Pseudomonas fluorescens (strain Pf0-1), this protein is UPF0149 protein Pfl01_5435.